Reading from the N-terminus, the 200-residue chain is Elongation factor Ts (200 aa).

Positions 83–86 are involved in Mg(2+) ion dislocation from EF-Tu; sequence TDFA.

The protein belongs to the EF-Ts family.

It is found in the cytoplasm. In terms of biological role, associates with the EF-Tu.GDP complex and induces the exchange of GDP to GTP. It remains bound to the aminoacyl-tRNA.EF-Tu.GTP complex up to the GTP hydrolysis stage on the ribosome. This Syntrophobacter fumaroxidans (strain DSM 10017 / MPOB) protein is Elongation factor Ts.